We begin with the raw amino-acid sequence, 147 residues long: Hemoglobin subunit gamma (147 aa).

One can recognise a Globin domain in the interval 3–147 (HFTEEDKATI…VASALSSRYH (145 aa)). Positions 64 and 93 each coordinate heme b.

Belongs to the globin family. In terms of assembly, heterotetramer of two alpha chains and two gamma chains in fetal hemoglobin (Hb F). As to expression, red blood cells.

In terms of biological role, gamma chains make up the fetal hemoglobin F, in combination with alpha chains. This Macaca fuscata fuscata (Japanese macaque) protein is Hemoglobin subunit gamma (HBG).